The sequence spans 929 residues: ATP-dependent DNA helicase PIF1 (929 aa).

A mitochondrion-targeting transit peptide spans 1–52; sequence MLRRLLQPAYNVALSGTSASTLPRKSASVGLVRTALMPVDYNAGALFCAMRF. The interval 55-89 is disordered; sequence GTEKERKREPKRGSKRRSKATTTLSTPTDAQTSVT. A compositionally biased stretch (basic and acidic residues) spans 56–66; the sequence is TEKERKREPKR. Residues 74–89 are compositionally biased toward polar residues; the sequence is ATTTLSTPTDAQTSVT. ATP is bound at residue 302-309; sequence GSAGTGKT. Residues 776–796 mediate DNA binding; the sequence is HLLYVAMSRVRNPEQLSMSSF. The segment at 902–929 is disordered; sequence HERRQKKMAVEGAKQTDTTKASSGESLE. Over residues 916 to 929 the composition is skewed to polar residues; sequence QTDTTKASSGESLE.

Belongs to the helicase family. PIF1 subfamily. Monomer. The cofactor is Mg(2+).

It is found in the mitochondrion. It carries out the reaction Couples ATP hydrolysis with the unwinding of duplex DNA at the replication fork by translocating in the 5'-3' direction. This creates two antiparallel DNA single strands (ssDNA). The leading ssDNA polymer is the template for DNA polymerase III holoenzyme which synthesizes a continuous strand.. It catalyses the reaction ATP + H2O = ADP + phosphate + H(+). Functionally, DNA-dependent ATPase and probable 5'-3' DNA helicase required for the maintenance of mitochondrial (kinetoplast) genome stability. Essential for replication of kinetoplast minicircles. Involved in the segregation of minicircle progeny. In Trypanosoma brucei brucei (strain 927/4 GUTat10.1), this protein is ATP-dependent DNA helicase PIF1.